Here is a 690-residue protein sequence, read N- to C-terminus: Protein-glucosylgalactosylhydroxylysine glucosidase (690 aa).

299–300 is a binding site for substrate; the sequence is WD. Glu-429 (proton donor) is an active-site residue. 497-498 is a binding site for substrate; the sequence is KQ.

This sequence belongs to the glycosyl hydrolase 65 family.

The catalysed reaction is (5R)-5-O-[alpha-D-glucosyl-(1-&gt;2)-beta-D-galactosyl]-5-hydroxy-L-lysyl-[collagen] + H2O = (5R)-5-O-(beta-D-galactosyl)-5-hydroxy-L-lysyl-[collagen] + D-glucose. Catalyzes the hydrolysis of glucose from the disaccharide unit linked to hydroxylysine residues of collagen and collagen-like proteins. The sequence is that of Protein-glucosylgalactosylhydroxylysine glucosidase from Mus musculus (Mouse).